A 546-amino-acid polypeptide reads, in one-letter code: Carboxypeptidase Y homolog A (546 aa).

The N-terminal stretch at 1–17 (MKLLASTVLMGAAAASI) is a signal peptide. A propeptide spanning residues 18–132 (APQQQVLKNP…KLEKYNMRAK (115 aa)) is cleaved from the precursor. Cystine bridges form between Cys-186–Cys-426, Cys-320–Cys-334, Cys-344–Cys-367, Cys-351–Cys-360, and Cys-389–Cys-396. Residue Asn-217 is glycosylated (N-linked (GlcNAc...) asparagine). Residue Ser-273 is part of the active site. The active site involves Asp-465. Asn-512 carries an N-linked (GlcNAc...) asparagine glycan. Residue His-523 is part of the active site.

Belongs to the peptidase S10 family.

Its subcellular location is the vacuole. The enzyme catalyses Release of a C-terminal amino acid with broad specificity.. Vacuolar carboxypeptidase involved in degradation of small peptides. Digests preferentially peptides containing an aliphatic or hydrophobic residue in P1' position, as well as methionine, leucine or phenylalanine in P1 position of ester substrate. In Sclerotinia sclerotiorum (strain ATCC 18683 / 1980 / Ss-1) (White mold), this protein is Carboxypeptidase Y homolog A (cpyA).